A 380-amino-acid chain; its full sequence is Erythronate-4-phosphate dehydrogenase (380 aa).

The substrate site is built by S45 and T66. NAD(+) is bound by residues D146, T174, 205–207 (ASR), and D231. R207 is an active-site residue. E236 is an active-site residue. H253 functions as the Proton donor in the catalytic mechanism. Residue G256 participates in NAD(+) binding. Residue Y257 participates in substrate binding.

This sequence belongs to the D-isomer specific 2-hydroxyacid dehydrogenase family. PdxB subfamily. Homodimer.

It localises to the cytoplasm. The catalysed reaction is 4-phospho-D-erythronate + NAD(+) = (R)-3-hydroxy-2-oxo-4-phosphooxybutanoate + NADH + H(+). The protein operates within cofactor biosynthesis; pyridoxine 5'-phosphate biosynthesis; pyridoxine 5'-phosphate from D-erythrose 4-phosphate: step 2/5. Catalyzes the oxidation of erythronate-4-phosphate to 3-hydroxy-2-oxo-4-phosphonooxybutanoate. The polypeptide is Erythronate-4-phosphate dehydrogenase (Pseudomonas putida (strain GB-1)).